A 131-amino-acid chain; its full sequence is Glycine cleavage system H protein (131 aa).

The Lipoyl-binding domain maps to 24–106 (RVTVGISDHA…YGEGWIFVVE (83 aa)). Lysine 65 is modified (N6-lipoyllysine).

This sequence belongs to the GcvH family. The glycine cleavage system is composed of four proteins: P, T, L and H. (R)-lipoate is required as a cofactor.

The glycine cleavage system catalyzes the degradation of glycine. The H protein shuttles the methylamine group of glycine from the P protein to the T protein. The protein is Glycine cleavage system H protein of Xanthomonas euvesicatoria pv. vesicatoria (strain 85-10) (Xanthomonas campestris pv. vesicatoria).